The chain runs to 156 residues: Small ribosomal subunit protein uS7 (156 aa).

Belongs to the universal ribosomal protein uS7 family. Part of the 30S ribosomal subunit. Contacts proteins S9 and S11.

Functionally, one of the primary rRNA binding proteins, it binds directly to 16S rRNA where it nucleates assembly of the head domain of the 30S subunit. Is located at the subunit interface close to the decoding center, probably blocks exit of the E-site tRNA. This is Small ribosomal subunit protein uS7 from Desulforamulus reducens (strain ATCC BAA-1160 / DSM 100696 / MI-1) (Desulfotomaculum reducens).